The sequence spans 664 residues: Probable urea active transporter 1 (664 aa).

A run of 16 helical transmembrane segments spans residues 9 to 29, 56 to 76, 86 to 106, 132 to 152, 165 to 185, 189 to 209, 252 to 272, 290 to 310, 327 to 347, 353 to 373, 395 to 415, 428 to 448, 454 to 474, 496 to 516, 555 to 575, and 587 to 607; these read SVGYGIVVGLGLGFAALMIFV, GLVASAVVSSWTWASTLLTSA, GAFWYASGACVQILLFTVLAI, GVFLVFAYITNILVMAMLLCG, TVAVCFLLPVGVIIYTMFGGI, FLTDYIHTVIILVILIMFSLA, GAIFFIINLAGNFGTVFVDNG, ILGGLAWFAIPWLAATTMGLV, MSDLEVSEGLVLPYAAIALMG, ATLLLVFMAVTSAASAELIAV, LLYTGHASLIVFGFAMSGFAT, YLLMGVLVCPAVVPATCVMLF, IAVTVSPVLGIISSIITWLVV, AGNVVGLLSPALYILILSIIF, VAALIITAAFIILWPWPMYGT, and WVVVGLIWIFFTVFAVGIFPL.

It belongs to the sodium:solute symporter (SSF) (TC 2.A.21) family.

The protein localises to the membrane. Involved in active transport of urea. The protein is Probable urea active transporter 1 (dur3-1) of Schizosaccharomyces pombe (strain 972 / ATCC 24843) (Fission yeast).